We begin with the raw amino-acid sequence, 149 residues long: Deoxyuridine 5'-triphosphate nucleotidohydrolase (149 aa).

Substrate contacts are provided by residues 68–70 (RSG), N81, and 85–87 (LID).

This sequence belongs to the dUTPase family. The cofactor is Mg(2+).

It catalyses the reaction dUTP + H2O = dUMP + diphosphate + H(+). The protein operates within pyrimidine metabolism; dUMP biosynthesis; dUMP from dCTP (dUTP route): step 2/2. Functionally, this enzyme is involved in nucleotide metabolism: it produces dUMP, the immediate precursor of thymidine nucleotides and it decreases the intracellular concentration of dUTP so that uracil cannot be incorporated into DNA. The chain is Deoxyuridine 5'-triphosphate nucleotidohydrolase from Azoarcus sp. (strain BH72).